The following is a 253-amino-acid chain: MSESPYTSGTTHFGFRDVAAKDKQKLVGEVFTSVARNYDLMNDLMSLGVHRAWKRYFVATAQVKPGDRVLDLAGGTGDIAVLLKERVGNEGAVVLGDINAGMLSVGRDRLTNRGLVSGFDYVQCNAEALPFPDQSFDLLTISFGLRNVTDKDAALREMYRVLKVGGQARVLEFSEVTADWFKPIYDFHSFKILPRLGQLFARDADSYQYLAESIRKHPPQESLKGMMGEAGFARCHFKNLTGGIVAIHSGYKI.

S-adenosyl-L-methionine is bound by residues T76, D97, 125–126, and S142; that span reads NA.

Belongs to the class I-like SAM-binding methyltransferase superfamily. MenG/UbiE family.

The enzyme catalyses a 2-demethylmenaquinol + S-adenosyl-L-methionine = a menaquinol + S-adenosyl-L-homocysteine + H(+). The catalysed reaction is a 2-methoxy-6-(all-trans-polyprenyl)benzene-1,4-diol + S-adenosyl-L-methionine = a 5-methoxy-2-methyl-3-(all-trans-polyprenyl)benzene-1,4-diol + S-adenosyl-L-homocysteine + H(+). Its pathway is quinol/quinone metabolism; menaquinone biosynthesis; menaquinol from 1,4-dihydroxy-2-naphthoate: step 2/2. The protein operates within cofactor biosynthesis; ubiquinone biosynthesis. Its function is as follows. Methyltransferase required for the conversion of demethylmenaquinol (DMKH2) to menaquinol (MKH2) and the conversion of 2-polyprenyl-6-methoxy-1,4-benzoquinol (DDMQH2) to 2-polyprenyl-3-methyl-6-methoxy-1,4-benzoquinol (DMQH2). This is Ubiquinone/menaquinone biosynthesis C-methyltransferase UbiE from Xanthomonas axonopodis pv. citri (strain 306).